The primary structure comprises 359 residues: Probable deacetylase AF_0130 (359 aa).

Catalysis depends on H126, which acts as the Proton donor/acceptor. 3 residues coordinate Zn(2+): D162, H164, and D249.

This sequence belongs to the histone deacetylase family. It depends on Zn(2+) as a cofactor.

In terms of biological role, probable deacetylase. The polypeptide is Probable deacetylase AF_0130 (Archaeoglobus fulgidus (strain ATCC 49558 / DSM 4304 / JCM 9628 / NBRC 100126 / VC-16)).